Reading from the N-terminus, the 199-residue chain is Potassium-transporting ATPase KdpC subunit (199 aa).

Residues 21–43 (LALLFVCGVVYTGTVTQLGGALF) form a helical membrane-spanning segment.

The protein belongs to the KdpC family. In terms of assembly, the system is composed of three essential subunits: KdpA, KdpB and KdpC.

It localises to the cell inner membrane. Its function is as follows. Part of the high-affinity ATP-driven potassium transport (or Kdp) system, which catalyzes the hydrolysis of ATP coupled with the electrogenic transport of potassium into the cytoplasm. This subunit acts as a catalytic chaperone that increases the ATP-binding affinity of the ATP-hydrolyzing subunit KdpB by the formation of a transient KdpB/KdpC/ATP ternary complex. This Shewanella putrefaciens (strain CN-32 / ATCC BAA-453) protein is Potassium-transporting ATPase KdpC subunit.